The sequence spans 371 residues: UDP-N-acetylglucosamine--N-acetylmuramyl-(pentapeptide) pyrophosphoryl-undecaprenol N-acetylglucosamine transferase (371 aa).

UDP-N-acetyl-alpha-D-glucosamine contacts are provided by residues 10-12 (TGG), N124, R165, S197, I251, and Q296.

Belongs to the glycosyltransferase 28 family. MurG subfamily.

Its subcellular location is the cell membrane. It catalyses the reaction di-trans,octa-cis-undecaprenyl diphospho-N-acetyl-alpha-D-muramoyl-L-alanyl-D-glutamyl-meso-2,6-diaminopimeloyl-D-alanyl-D-alanine + UDP-N-acetyl-alpha-D-glucosamine = di-trans,octa-cis-undecaprenyl diphospho-[N-acetyl-alpha-D-glucosaminyl-(1-&gt;4)]-N-acetyl-alpha-D-muramoyl-L-alanyl-D-glutamyl-meso-2,6-diaminopimeloyl-D-alanyl-D-alanine + UDP + H(+). Its pathway is cell wall biogenesis; peptidoglycan biosynthesis. In terms of biological role, cell wall formation. Catalyzes the transfer of a GlcNAc subunit on undecaprenyl-pyrophosphoryl-MurNAc-pentapeptide (lipid intermediate I) to form undecaprenyl-pyrophosphoryl-MurNAc-(pentapeptide)GlcNAc (lipid intermediate II). The sequence is that of UDP-N-acetylglucosamine--N-acetylmuramyl-(pentapeptide) pyrophosphoryl-undecaprenol N-acetylglucosamine transferase from Carboxydothermus hydrogenoformans (strain ATCC BAA-161 / DSM 6008 / Z-2901).